Reading from the N-terminus, the 450-residue chain is MIKKLLIANRGEIAVRIIRACRELGIETVAVYSEADKDALHVQMADEAFCIGPKASKDSYLNVTNIVSVAKLTGTDAIHPGYGFLAENADFAELCEEVNVTFVGPSADAISKMGTKDVARETMKQAGVPIVPGSQGIIENVEEAVSLANEIGYPVIIKATAGGGGKGIRVARTEEELINGIKITQQEAATAFGNPGVYIEKYIEDFRHVEIQVLADNYGNTIHLGERDCSIQRRLQKLLEESPSPALDSEIREQMGDAAVKAAKAVGYTGAGTVEFIYDYNEQRYYFMEMNTRIQVEHPVTEMVTGTDLIKEQIKVASGMELSLKQEDVEFEGWAIECRINAENPSKNFMPSPGEIKMYLPPGGLGVRVDSAAYPGYSIPPYYDSMIAKVITYGKTRDEAIARMKRALSEFVIEGIETTIPFHLKLLEHETFVSGEFNTKFLETYDVMGS.

Positions 1–447 (MIKKLLIANR…NTKFLETYDV (447 aa)) constitute a Biotin carboxylation domain. Residues lysine 116, lysine 158, 164–165 (GG), 200–203 (EKYI), and histidine 208 each bind ATP. The 199-residue stretch at 120 to 318 (RETMKQAGVP…LIKEQIKVAS (199 aa)) folds into the ATP-grasp domain. Lysine 237 provides a ligand contact to hydrogencarbonate. Glutamate 275 and glutamate 289 together coordinate ATP. Glutamate 275, glutamate 289, and asparagine 291 together coordinate Mg(2+). Mn(2+) contacts are provided by glutamate 275, glutamate 289, and asparagine 291. Residues arginine 293, valine 296, and arginine 339 each contribute to the hydrogencarbonate site. Residue arginine 293 is part of the active site. Arginine 339 lines the biotin pocket.

Acetyl-CoA carboxylase is a heterohexamer of biotin carboxyl carrier protein, biotin carboxylase and the two subunits of carboxyl transferase in a 2:2 complex. Requires Mg(2+) as cofactor. It depends on Mn(2+) as a cofactor.

The catalysed reaction is N(6)-biotinyl-L-lysyl-[protein] + hydrogencarbonate + ATP = N(6)-carboxybiotinyl-L-lysyl-[protein] + ADP + phosphate + H(+). It participates in lipid metabolism; malonyl-CoA biosynthesis; malonyl-CoA from acetyl-CoA: step 1/1. In terms of biological role, this protein is a component of the acetyl coenzyme A carboxylase complex; first, biotin carboxylase catalyzes the carboxylation of the carrier protein and then the transcarboxylase transfers the carboxyl group to form malonyl-CoA. The protein is Biotin carboxylase 1 (accC1) of Bacillus subtilis (strain 168).